Consider the following 294-residue polypeptide: 4-hydroxy-tetrahydrodipicolinate synthase (294 aa).

Residue threonine 44 participates in pyruvate binding. Tyrosine 132 functions as the Proton donor/acceptor in the catalytic mechanism. Catalysis depends on lysine 161, which acts as the Schiff-base intermediate with substrate. Isoleucine 206 is a pyruvate binding site.

It belongs to the DapA family. As to quaternary structure, homotetramer; dimer of dimers.

It localises to the cytoplasm. The catalysed reaction is L-aspartate 4-semialdehyde + pyruvate = (2S,4S)-4-hydroxy-2,3,4,5-tetrahydrodipicolinate + H2O + H(+). Its pathway is amino-acid biosynthesis; L-lysine biosynthesis via DAP pathway; (S)-tetrahydrodipicolinate from L-aspartate: step 3/4. Its function is as follows. Catalyzes the condensation of (S)-aspartate-beta-semialdehyde [(S)-ASA] and pyruvate to 4-hydroxy-tetrahydrodipicolinate (HTPA). This is 4-hydroxy-tetrahydrodipicolinate synthase from Thermotoga sp. (strain RQ2).